A 403-amino-acid chain; its full sequence is Alkaline protease 1 (403 aa).

Positions 1-21 (MQSIKRTLLLLGALLPAALAA) are cleaved as a signal peptide. Positions 22–125 (PAREPHPSSN…QIWYLDALTT (104 aa)) are excised as a propeptide. One can recognise an Inhibitor I9 domain in the interval 36–120 (KYIITFKSGI…HVEEDQIWYL (85 aa)). Positions 130 to 403 (PWGLGSISHK…PNKLAYNGAA (274 aa)) constitute a Peptidase S8 domain. Catalysis depends on charge relay system residues aspartate 162 and histidine 193. Residues asparagine 253 and asparagine 307 are each glycosylated (N-linked (GlcNAc...) asparagine). Catalysis depends on serine 349, which acts as the Charge relay system.

The protein belongs to the peptidase S8 family.

It is found in the secreted. It carries out the reaction Hydrolysis of proteins with broad specificity, and of Bz-Arg-OEt &gt; Ac-Tyr-OEt. Does not hydrolyze peptide amides.. In terms of biological role, secreted alkaline protease that allows assimilation of proteinaceous substrates. This is Alkaline protease 1 (alp1) from Aspergillus clavatus (strain ATCC 1007 / CBS 513.65 / DSM 816 / NCTC 3887 / NRRL 1 / QM 1276 / 107).